Reading from the N-terminus, the 520-residue chain is 4-hydroxyphenylacetate 3-monooxygenase oxygenase component (520 aa).

It belongs to the FADH(2)-utilizing monooxygenase family. In terms of assembly, 4-HPA 3-monooxygenase consists of a reductase component HpaC and an oxygenase component HpaB.

The catalysed reaction is 4-hydroxyphenylacetate + FADH2 + O2 = 3,4-dihydroxyphenylacetate + FAD + H2O + H(+). It participates in aromatic compound metabolism; 4-hydroxyphenylacetate degradation; pyruvate and succinate semialdehyde from 4-hydroxyphenylacetate: step 1/7. Functionally, utilizes FADH(2) supplied by HpaC or by another flavin reductase, to catalyze the hydroxylation of 4-hydroxyphenylacetic acid, leading to the production of 3,4-DHPA. This chain is 4-hydroxyphenylacetate 3-monooxygenase oxygenase component (hpaB), found in Klebsiella oxytoca.